The sequence spans 297 residues: MGTALDIKIKRANKVYHAGEVLSGVVVISSKDSVQHQGVSLTMEGTVNLQLSAKSVGVFEAFYNSVKPIQIINSNIEMVKPGKFPSGKTEIPFEFPLHVKGNKVLYETYHGVFVNIQYTLRCDMKRSLLAKDLTKTCEFIVHSAPQKGKFSPSPVHFTITPETLQNARERALLPKFLLRGHLNSTNCVITQPLTGELVVESSEAAIRSVELQLVRVETCGCAEGYARDATEIQNIQIADGDVCRGLSVPIYMVFPRLFTCPTLETTNFKVEFEVNIVVLLHPDHLITENFPLKLCRI.

The protein belongs to the VPS26 family. In terms of assembly, component of the commander complex that is essential for endosomal recycling of transmembrane cargos; the commander complex is composed of the CCC subcomplex and the retriever subcomplex. Component of the heterotrimeric retriever complex consisting of VPS26C, VPS29 and VPS35L; within the complex interacts with VPS35L. Interacts with SNX17 (via C-terminus); the interaction is direct and associates SNX17 with the retriever complex. Interacts with SNX31; the interaction is direct.

It is found in the endosome. Its function is as follows. Component of the commander complex that is essential for endosomal recycling of transmembrane cargos; the commander complex is composed of the CCC subcomplex and the retriever subcomplex. Component of the retriever complex, which is a heterotrimeric complex related to retromer cargo-selective complex (CSC) and essential for retromer-independent retrieval and recycling of numerous cargos such as integrin alpha-5/beta-1 (ITGA5:ITGB1). The recruitment of the retriever complex to the endosomal membrane involves CCC and WASH complexes. In the endosomes, drives the retriever and recycling of NxxY-motif-containing cargo proteins by coupling to SNX17, a cargo essential for the homeostatic maintenance of numerous cell surface proteins associated with processes that include cell migration, cell adhesion, nutrient supply and cell signaling. The chain is Vacuolar protein sorting-associated protein 26C (VPS26C) from Pongo abelii (Sumatran orangutan).